The sequence spans 1241 residues: ATP-dependent helicase/nuclease subunit A (1241 aa).

Residues 12–485 (SQWTDDQWKA…IDLAKNFRSR (474 aa)) enclose the UvrD-like helicase ATP-binding domain. 33–40 (AAAGSGKT) is an ATP binding site. The UvrD-like helicase C-terminal domain maps to 505–805 (GEIDYDADAE…RIMTIHKSKG (301 aa)).

The protein belongs to the helicase family. AddA subfamily. As to quaternary structure, heterodimer of AddA and AddB/RexB. Requires Mg(2+) as cofactor.

The catalysed reaction is Couples ATP hydrolysis with the unwinding of duplex DNA by translocating in the 3'-5' direction.. It carries out the reaction ATP + H2O = ADP + phosphate + H(+). Functionally, the heterodimer acts as both an ATP-dependent DNA helicase and an ATP-dependent, dual-direction single-stranded exonuclease. Recognizes the chi site generating a DNA molecule suitable for the initiation of homologous recombination. The AddA nuclease domain is required for chi fragment generation; this subunit has the helicase and 3' -&gt; 5' nuclease activities. The protein is ATP-dependent helicase/nuclease subunit A of Bacillus cereus (strain Q1).